A 364-amino-acid polypeptide reads, in one-letter code: Lysophosphatidic acid receptor 1 (364 aa).

Residues 1–50 are Extracellular-facing; sequence MAAISTSIPVISQPQFTAMNEPQCFYNESIAFFYNRSGKHLATEWNTVSK. 2 disulfide bridges follow: cysteine 24–cysteine 190 and cysteine 188–cysteine 195. Residues asparagine 27 and asparagine 35 are each glycosylated (N-linked (GlcNAc...) asparagine). Lysine 39 is an a 1-acyl-sn-glycero-3-phosphate binding site. Residues 51–75 traverse the membrane as a helical segment; that stretch reads LVMGLGITVCIFIMLANLLVMVAIY. Residues 76–83 are Cytoplasmic-facing; it reads VNRRFHFP. A helical membrane pass occupies residues 84–107; that stretch reads IYYLMANLAAADFFAGLAYFYLMF. The Extracellular segment spans residues 108–121; that stretch reads NTGPNTRRLTVSTW. The helical transmembrane segment at 122-144 threads the bilayer; it reads LLRQGLIDTSLTASVANLLAIAI. 124–129 is a binding site for a 1-acyl-sn-glycero-3-phosphate; sequence RQGLID. Residues 145 to 163 are Cytoplasmic-facing; the sequence is ERHITVFRMQLHTRMSNRR. The chain crosses the membrane as a helical span at residues 164–184; that stretch reads VVVVIVVIWTMAIVMGAIPSV. At 185 to 204 the chain is on the extracellular side; it reads GWNCICDIENCSNMAPLYSD. A helical transmembrane segment spans residues 205–225; the sequence is SYLVFWAIFNLVTFVVMVVLY. Tryptophan 210 contacts a 1-acyl-sn-glycero-3-phosphate. The Cytoplasmic segment spans residues 226–255; sequence AHIFGYVRQRTMRMSRHSSGPRRNRDTMMS. Residues 256-280 form a helical membrane-spanning segment; the sequence is LLKTVVIVLGAFIICWTPGLVLLLL. Residues 281 to 294 lie on the Extracellular side of the membrane; sequence DVCCPQCDVLAYEK. An intrachain disulfide couples cysteine 284 to cysteine 287. The chain crosses the membrane as a helical span at residues 295–315; the sequence is FFLLLAEFNSAMNPIIYSYRD. At 316 to 364 the chain is on the cytoplasmic side; the sequence is KEMSATFRQILCCQRSENPTGPTEGSDRSASSLNHTILAGVHSNDHSVV. A Phosphoserine modification is found at serine 341. A Phosphothreonine modification is found at threonine 351.

The protein belongs to the G-protein coupled receptor 1 family. In terms of assembly, interacts with RALA and GRK2. Interacts with GNAQ and GNA13. Interacts with CD14; the interaction is enhanced by exposure to bacterial lipopolysaccharide (LPS). Post-translationally, N-glycosylated. In terms of tissue distribution, expressed in many adult organs, including brain, heart, colon, small intestine, placenta, prostate, ovary, pancreas, testes, spleen, skeletal muscle, and kidney. Little or no expression in liver, lung, thymus, or peripheral blood leukocytes. Detected in lung fibroblasts from bronchoalveolar fluid from patients with idiopathic pulmonary fibrosis. Detected in bone marrow-derived mesenchymal stem cells.

The protein localises to the cell surface. The protein resides in the cell membrane. Its subcellular location is the endosome. Its function is as follows. Receptor for lysophosphatidic acid (LPA). Plays a role in the reorganization of the actin cytoskeleton, cell migration, differentiation and proliferation, and thereby contributes to the responses to tissue damage and infectious agents. Activates downstream signaling cascades via the G(i)/G(o), G(12)/G(13), and G(q) families of heteromeric G proteins. Signaling inhibits adenylyl cyclase activity and decreases cellular cAMP levels. Signaling triggers an increase of cytoplasmic Ca(2+) levels. Activates RALA; this leads to the activation of phospholipase C (PLC) and the formation of inositol 1,4,5-trisphosphate. Signaling mediates activation of down-stream MAP kinases. Contributes to the regulation of cell shape. Promotes Rho-dependent reorganization of the actin cytoskeleton in neuronal cells and neurite retraction. Promotes the activation of Rho and the formation of actin stress fibers. Promotes formation of lamellipodia at the leading edge of migrating cells via activation of RAC1. Through its function as LPA receptor, plays a role in chemotaxis and cell migration, including responses to injury and wounding. Plays a role in triggering inflammation in response to bacterial lipopolysaccharide (LPS) via its interaction with CD14. Promotes cell proliferation in response to LPA. Inhibits the intracellular ciliogenesis pathway in response to LPA and through AKT1 activation. Required for normal skeleton development. May play a role in osteoblast differentiation. Required for normal brain development. Required for normal proliferation, survival and maturation of newly formed neurons in the adult dentate gyrus. Plays a role in pain perception and in the initiation of neuropathic pain. This Homo sapiens (Human) protein is Lysophosphatidic acid receptor 1 (LPAR1).